The chain runs to 459 residues: Putrescine aminotransferase (459 aa).

Residues Gly150 to Thr151 and Gln274 each bind pyridoxal 5'-phosphate. N6-(pyridoxal phosphate)lysine is present on Lys300. Thr332 serves as a coordination point for pyridoxal 5'-phosphate.

This sequence belongs to the class-III pyridoxal-phosphate-dependent aminotransferase family. Putrescine aminotransferase subfamily. It depends on pyridoxal 5'-phosphate as a cofactor.

The catalysed reaction is an alkane-alpha,omega-diamine + 2-oxoglutarate = an omega-aminoaldehyde + L-glutamate. The enzyme catalyses putrescine + 2-oxoglutarate = 1-pyrroline + L-glutamate + H2O. It carries out the reaction cadaverine + 2-oxoglutarate = 5-aminopentanal + L-glutamate. It functions in the pathway amine and polyamine degradation; putrescine degradation; 4-aminobutanal from putrescine (transaminase route): step 1/1. Its function is as follows. Catalyzes the aminotransferase reaction from putrescine to 2-oxoglutarate, leading to glutamate and 4-aminobutanal, which spontaneously cyclizes to form 1-pyrroline. This is the first step in one of two pathways for putrescine degradation, where putrescine is converted into 4-aminobutanoate (gamma-aminobutyrate or GABA) via 4-aminobutanal. Also functions as a cadaverine transaminase in a a L-lysine degradation pathway to succinate that proceeds via cadaverine, glutarate and L-2-hydroxyglutarate. This Salmonella choleraesuis (strain SC-B67) protein is Putrescine aminotransferase.